A 255-amino-acid polypeptide reads, in one-letter code: Large ribosomal subunit protein uL6m (255 aa).

The interval 39 to 61 is disordered; it reads AARRNFSATTTRPSKLGRTPLSI.

Belongs to the universal ribosomal protein uL6 family. In terms of assembly, component of the mitochondrial large ribosomal subunit (mt-LSU). Mature N.crassa 74S mitochondrial ribosomes consist of a small (37S) and a large (54S) subunit. The 37S small subunit contains a 16S ribosomal RNA (16S mt-rRNA) and 32 different proteins. The 54S large subunit contains a 23S rRNA (23S mt-rRNA) and 42 different proteins.

The protein resides in the mitochondrion. Functionally, component of the mitochondrial ribosome (mitoribosome), a dedicated translation machinery responsible for the synthesis of mitochondrial genome-encoded proteins, including at least some of the essential transmembrane subunits of the mitochondrial respiratory chain. The mitoribosomes are attached to the mitochondrial inner membrane and translation products are cotranslationally integrated into the membrane. The polypeptide is Large ribosomal subunit protein uL6m (mrpl6) (Neurospora crassa (strain ATCC 24698 / 74-OR23-1A / CBS 708.71 / DSM 1257 / FGSC 987)).